Here is a 251-residue protein sequence, read N- to C-terminus: Aquaporin (251 aa).

At 1–11 (MAGETLRKIQS) the chain is on the cytoplasmic side. A helical transmembrane segment spans residues 12–32 (LLGEMVASFIFGFAVYSAILG). The Extracellular segment spans residues 33–42 (STIAQQPAAK). Residues 43 to 63 (VIIGLTVGFSAIGIIYSFSDV) form a helical membrane-spanning segment. Topologically, residues 64–86 (TIAHFNPAITLAAILTGKMGILC) are cytoplasmic. The NPA motif lies at 69-71 (NPA). The chain crosses the membrane as a helical span at residues 87 to 107 (GLGYMLAQCVGFILAVCALLV). The Extracellular segment spans residues 108 to 133 (CSPVGYKETLNVIRPAPAPFGADNLN). Residues 134-154 (VFFTEFFLTAILVHIAFAVAV) form a helical membrane-spanning segment. Topologically, residues 155–179 (NPYRPKVDTDGKFVDPDEKEPVDRR) are cytoplasmic. Residues 180-200 (ITAPLCIGLTLGFLAFMGLVT) form a helical membrane-spanning segment. At 201-224 (SGGAFNPGLTLAPVIMSNTWQHFW) the chain is on the extracellular side. Positions 206 to 208 (NPG) match the NPG motif. Residues 225–245 (LYLGAQYLGGLVGGLLQVFVL) form a helical membrane-spanning segment. Topologically, residues 246 to 251 (YKLSSN) are cytoplasmic.

Belongs to the MIP/aquaporin (TC 1.A.8) family.

Its subcellular location is the cell membrane. Water channel required to facilitate the transport of water across membranes. Involved in osmotolerance. The chain is Aquaporin (AQP) from Encephalitozoon hellem (Microsporidian parasite).